The sequence spans 262 residues: Trypsin theta (262 aa).

Residues 1–19 (MHRLVVLLVCLAVGSACAG) form the signal peptide. Positions 20–34 (TVGVSNGDPFEREGR) are cleaved as a propeptide — activation peptide. One can recognise a Peptidase S1 domain in the interval 35-260 (IVGGEDTTIG…LRKWILNASE (226 aa)). Cysteines 61 and 77 form a disulfide. Catalysis depends on charge relay system residues histidine 76 and aspartate 121. Intrachain disulfides connect cysteine 186–cysteine 203 and cysteine 212–cysteine 236. Residue serine 216 is the Charge relay system of the active site.

Belongs to the peptidase S1 family.

It is found in the secreted. The protein localises to the extracellular space. The catalysed reaction is Preferential cleavage: Arg-|-Xaa, Lys-|-Xaa.. This is Trypsin theta (thetaTry) from Drosophila melanogaster (Fruit fly).